Consider the following 89-residue polypeptide: UPF0297 protein OB2008 (89 aa).

The protein belongs to the UPF0297 family.

This is UPF0297 protein OB2008 from Oceanobacillus iheyensis (strain DSM 14371 / CIP 107618 / JCM 11309 / KCTC 3954 / HTE831).